The sequence spans 99 residues: Beta-defensin 127 (99 aa).

Positions M1–Q20 are cleaved as a signal peptide. Cystine bridges form between C24–C53, C33–C47, and C37–C54. The propeptide occupies I66–T99.

The protein belongs to the beta-defensin family.

It localises to the secreted. Has antibacterial activity. This is Beta-defensin 127 (DEFB127) from Homo sapiens (Human).